Consider the following 796-residue polypeptide: Volume-regulated anion channel subunit LRRC8E (796 aa).

The Cytoplasmic segment spans residues 1–22; sequence MIPVAEFKQFTEQQPAFKVLKP. A helical transmembrane segment spans residues 23–43; it reads WWDVLAEYLTVAMLMIGVFGC. The Extracellular portion of the chain corresponds to 44–116; that stretch reads TLQVTQDKII…YETALHWYAK (73 aa). Cysteines 54 and 301 form a disulfide. N63 carries N-linked (GlcNAc...) asparagine glycosylation. Residues 117-137 form a helical membrane-spanning segment; that stretch reads YFPYLVVIHTLIFMVCTSFWF. The Cytoplasmic portion of the chain corresponds to 138-265; the sequence is KFPGTSSKIE…IRQTVLKVCK (128 aa). A helical membrane pass occupies residues 266 to 286; sequence FLAILVYNLVYVEKISFLVAC. Residues 287–313 are Extracellular-facing; sequence RVETSEVTGYASFCCNHTKAHLFSKLA. N302 carries N-linked (GlcNAc...) asparagine glycosylation. A helical transmembrane segment spans residues 314–334; the sequence is FCYISFVCIYGLTCIYTLYWL. Residues 335–796 are Cytoplasmic-facing; it reads FHRPLKEYSF…AEVRDKMEEE (462 aa). LRR repeat units lie at residues 508-529, 536-557, 559-579, 583-604, 606-627, 631-652, 654-675, 677-698, 700-721, 723-744, and 746-767; these read GLEELHLEGLFPQELARAATLE, QLKVLSLRSNAGKVPASVTDVA, HLQRLSLHNDGARLVALNSLK, ALRELELVACGLERIPHAVFSL, ALQELDLKDNHLRSIEEILSFQ, KLVTLRLWHNQIAYVPEHVRKL, SLEQLYLSYNKLETLPSQLGLC, GLRLLDVSHNGLHSLPPEVGLL, NLQHLALSYNALEALPEELFFC, KLRTLLLGDNQLSQLSPHVGAL, and ALSRLELKGNRLEALPEELGNC.

This sequence belongs to the LRRC8 family. As to quaternary structure, heterohexamer; oligomerizes with other LRRC8 proteins (LRRC8A, LRRC8C, LRRC8D and/or LRRC8B) to form a heterohexamer. In vivo, the subunit composition may depend primarily on expression levels, and heterooligomeric channels containing various proportions of the different LRRC8 proteins may coexist.

It localises to the cell membrane. It is found in the endoplasmic reticulum membrane. The protein localises to the lysosome membrane. It catalyses the reaction chloride(in) = chloride(out). It carries out the reaction iodide(out) = iodide(in). The enzyme catalyses taurine(out) = taurine(in). The catalysed reaction is 2',3'-cGAMP(out) = 2',3'-cGAMP(in). Functionally, non-essential component of the volume-regulated anion channel (VRAC, also named VSOAC channel), an anion channel required to maintain a constant cell volume in response to extracellular or intracellular osmotic changes. The VRAC channel conducts iodide better than chloride and can also conduct organic osmolytes like taurine. Mediates efflux of amino acids, such as aspartate, in response to osmotic stress. The VRAC channel also mediates transport of immunoreactive cyclic dinucleotide GMP-AMP (2'-3'-cGAMP), an immune messenger produced in response to DNA virus in the cytosol. Channel activity requires LRRC8A plus at least one other family member (LRRC8B, LRRC8C, LRRC8D or LRRC8E); channel characteristics depend on the precise subunit composition. Also plays a role in lysosome homeostasis by forming functional lysosomal VRAC channels in response to low cytoplasmic ionic strength condition: lysosomal VRAC channels are necessary for the formation of large lysosome-derived vacuoles, which store and then expel excess water to maintain cytosolic water homeostasis. The polypeptide is Volume-regulated anion channel subunit LRRC8E (Homo sapiens (Human)).